A 336-amino-acid chain; its full sequence is Nuclear egress protein 2 (336 aa).

The Perinuclear space segment spans residues Met-1–Pro-315. Disordered stretches follow at residues Arg-193–Gly-221 and Arg-277–Glu-297. A compositionally biased stretch (basic residues) spans Arg-277–His-288. A helical membrane pass occupies residues Tyr-316–Leu-333. The Nuclear segment spans residues Arg-334–Thr-336.

Belongs to the herpesviridae NEC2 protein family. Forms a heterodimeric viral nuclear egress complex (NEC) with NEC1. Interacts with host IKBKE; this interaction inhibits host IKBKE kinase activity and IRF3 nuclear translocation. Phosphorylated.

It is found in the host nucleus inner membrane. It localises to the host cytoplasm. The protein resides in the host perinuclear region. Its function is as follows. Plays an essential role in virion nuclear egress, the first step of virion release from infected cell. Within the host nucleus, NEC1 interacts with the newly formed capsid through the vertexes and directs it to the inner nuclear membrane by associating with NEC2. Induces the budding of the capsid at the inner nuclear membrane as well as its envelopment into the perinuclear space. There, the NEC1/NEC2 complex promotes the fusion of the enveloped capsid with the outer nuclear membrane and the subsequent release of the viral capsid into the cytoplasm where it will reach the secondary budding sites in the host Golgi or trans-Golgi network. Inhibits host IKBKE and IRF3, thereby impairing type I IFN signaling. In Homo sapiens (Human), this protein is Nuclear egress protein 2.